Consider the following 1639-residue polypeptide: Peroxide stress-activated histidine kinase mak1 (1639 aa).

Polar residues predominate over residues 38–49 (SFTNSQNSSVGS). Residues 38–76 (SFTNSQNSSVGSVHSPILESPTSLNRQHRNSFSFNNVSS) form a disordered region. Residues 67–76 (NSFSFNNVSS) show a composition bias toward low complexity. The PAS 1 domain occupies 716–786 (PFPLLKVIID…NDWKSSLFSG (71 aa)). The PAC 1 domain occupies 789–841 (FYHEIRLQRFDNVYRYFICRAVPLRDCTGSVLHFFGTMTDVHDQKLAERELQK). One can recognise a PAS 2 domain in the interval 848–920 (NENSYRSLAE…ESLEGTFNNQ (73 aa)). The region spanning 929 to 982 (FAAEIRFRSTDGHYRWHLVKSVCVNNSADTSTNLWLGTCTDIHDHKMLEEKLQE) is the PAC 2 domain. The Histidine kinase domain occupies 1000–1223 (NMSHEIRTPL…RFMWTATFTM (224 aa)). Phosphohistidine; by autocatalysis is present on His1003. Positions 1507–1629 (SVLLAEDNII…HLSLIISGIL (123 aa)) constitute a Response regulatory domain. Asp1559 bears the 4-aspartylphosphate mark.

The protein localises to the cytoplasm. The enzyme catalyses ATP + protein L-histidine = ADP + protein N-phospho-L-histidine.. Its function is as follows. Involved in the control of the SAPK-dependent transcriptional response to peroxide stress. Also has a role in G2/M regulation. This Schizosaccharomyces pombe (strain 972 / ATCC 24843) (Fission yeast) protein is Peroxide stress-activated histidine kinase mak1 (mak1).